Here is a 142-residue protein sequence, read N- to C-terminus: Large ribosomal subunit protein uL13c (142 aa).

Belongs to the universal ribosomal protein uL13 family. In terms of assembly, part of the 50S ribosomal subunit.

The protein localises to the plastid. It is found in the chloroplast. In Pyropia yezoensis (Susabi-nori), this protein is Large ribosomal subunit protein uL13c.